The sequence spans 783 residues: Probable alpha,alpha-trehalose-phosphate synthase [UDP-forming] 3 (783 aa).

The glycosyltransferase stretch occupies residues 11–456; sequence QTLLVVANRL…GFDFLSELND (446 aa).

In the N-terminal section; belongs to the glycosyltransferase 20 family. It in the C-terminal section; belongs to the trehalose phosphatase family.

The catalysed reaction is D-glucose 6-phosphate + UDP-alpha-D-glucose = alpha,alpha-trehalose 6-phosphate + UDP + H(+). The protein is Probable alpha,alpha-trehalose-phosphate synthase [UDP-forming] 3 (TPS3) of Arabidopsis thaliana (Mouse-ear cress).